The chain runs to 426 residues: Spermidine/putrescine import ATP-binding protein PotA (426 aa).

Positions Ile-6 to Ile-238 constitute an ABC transporter domain. Residue Gly-40–Ser-47 participates in ATP binding.

Belongs to the ABC transporter superfamily. Spermidine/putrescine importer (TC 3.A.1.11.1) family. The complex is composed of two ATP-binding proteins (PotA), two transmembrane proteins (PotB and PotC) and a solute-binding protein (PotD).

The protein resides in the cell membrane. The enzyme catalyses ATP + H2O + polyamine-[polyamine-binding protein]Side 1 = ADP + phosphate + polyamineSide 2 + [polyamine-binding protein]Side 1.. Part of the ABC transporter complex PotABCD involved in spermidine/putrescine import. Responsible for energy coupling to the transport system. This is Spermidine/putrescine import ATP-binding protein PotA from Lactococcus lactis subsp. cremoris (strain SK11).